A 55-amino-acid chain; its full sequence is Mannose/glucose-specific lectin alpha chain (55 aa).

It belongs to the leguminous lectin family. Tetramer of two alpha and two beta chains.

This is Mannose/glucose-specific lectin alpha chain from Lathyrus sativus (White vetchling).